The following is a 172-amino-acid chain: MDWLYVGKIANTHGLKGEVKILAATDFPEERFKKGNTLFLDVDGTKQEMTITTYRPHKQFHLVTFKGFDNINLIEKYKGLKLYVHAEHVHDLDEHEFYYHEIIGCEAVVDGEVIGVVDDIFETNGANDVWVIKRPGKSDALIPYIESVVQEIDVDAKRVVITPIPGMIDDED.

One can recognise a PRC barrel domain in the interval 93–167; it reads DEHEFYYHEI…RVVITPIPGM (75 aa).

Belongs to the RimM family. As to quaternary structure, binds ribosomal protein uS19.

It is found in the cytoplasm. An accessory protein needed during the final step in the assembly of 30S ribosomal subunit, possibly for assembly of the head region. Essential for efficient processing of 16S rRNA. May be needed both before and after RbfA during the maturation of 16S rRNA. It has affinity for free ribosomal 30S subunits but not for 70S ribosomes. This is Ribosome maturation factor RimM from Exiguobacterium sp. (strain ATCC BAA-1283 / AT1b).